Consider the following 528-residue polypeptide: Tubulin-specific chaperone E (528 aa).

The CAP-Gly domain occupies glycine 27–arginine 71. LRR repeat units lie at residues cysteine 152–aspartate 176, leucine 178–threonine 206, leucine 207–tryptophan 229, valine 231–glutamine 253, threonine 254–isoleucine 274, arginine 279–isoleucine 300, and serine 309–aspartate 330. In terms of domain architecture, LRRCT spans asparagine 343–aspartate 385. Position 464 is an N6-acetyllysine (lysine 464). Serine 496 bears the Phosphoserine mark.

Belongs to the TBCE family. As to quaternary structure, supercomplex made of cofactors A to E. Cofactors A and D function by capturing and stabilizing tubulin in a quasi-native conformation. Cofactor E binds to the cofactor D-tubulin complex; interaction with cofactor C then causes the release of tubulin polypeptides that are committed to the native state. Cofactors B and E can form a heterodimer which binds to alpha-tubulin and enhances their ability to dissociate tubulin heterodimers. Interacts with TBCD.

It localises to the cytoplasm. The protein localises to the cytoskeleton. In terms of biological role, tubulin-folding protein; involved in the second step of the tubulin folding pathway and in the regulation of tubulin heterodimer dissociation. Required for correct organization of microtubule cytoskeleton and mitotic splindle, and maintenance of the neuronal microtubule network. The sequence is that of Tubulin-specific chaperone E (TBCE) from Bos taurus (Bovine).